A 344-amino-acid chain; its full sequence is tRNA N6-adenosine threonylcarbamoyltransferase (344 aa).

Fe cation-binding residues include His-119 and His-123. Substrate-binding positions include 141–145 (VVSGG), Asp-174, Gly-187, Asp-191, and Asn-280. Asp-310 contributes to the Fe cation binding site.

Belongs to the KAE1 / TsaD family. Requires Fe(2+) as cofactor.

Its subcellular location is the cytoplasm. The catalysed reaction is L-threonylcarbamoyladenylate + adenosine(37) in tRNA = N(6)-L-threonylcarbamoyladenosine(37) in tRNA + AMP + H(+). Required for the formation of a threonylcarbamoyl group on adenosine at position 37 (t(6)A37) in tRNAs that read codons beginning with adenine. Is involved in the transfer of the threonylcarbamoyl moiety of threonylcarbamoyl-AMP (TC-AMP) to the N6 group of A37, together with TsaE and TsaB. TsaD likely plays a direct catalytic role in this reaction. This chain is tRNA N6-adenosine threonylcarbamoyltransferase, found in Listeria welshimeri serovar 6b (strain ATCC 35897 / DSM 20650 / CCUG 15529 / CIP 8149 / NCTC 11857 / SLCC 5334 / V8).